A 257-amino-acid polypeptide reads, in one-letter code: Phosphatidylglycerol--prolipoprotein diacylglyceryl transferase (257 aa).

The next 7 membrane-spanning stretches (helical) occupy residues 13-33 (FGPI…AVGG), 49-69 (FLLN…RLMF), 88-108 (IYEG…AGLY), 123-143 (FAVV…IFNH), 152-172 (FFFG…FLLI), 186-202 (YQFW…RGVF), and 223-243 (IGLF…AYWM). Residue arginine 136 participates in a 1,2-diacyl-sn-glycero-3-phospho-(1'-sn-glycerol) binding.

It belongs to the Lgt family.

The protein resides in the cell membrane. It catalyses the reaction L-cysteinyl-[prolipoprotein] + a 1,2-diacyl-sn-glycero-3-phospho-(1'-sn-glycerol) = an S-1,2-diacyl-sn-glyceryl-L-cysteinyl-[prolipoprotein] + sn-glycerol 1-phosphate + H(+). It functions in the pathway protein modification; lipoprotein biosynthesis (diacylglyceryl transfer). Its function is as follows. Catalyzes the transfer of the diacylglyceryl group from phosphatidylglycerol to the sulfhydryl group of the N-terminal cysteine of a prolipoprotein, the first step in the formation of mature lipoproteins. The protein is Phosphatidylglycerol--prolipoprotein diacylglyceryl transferase of Caldanaerobacter subterraneus subsp. tengcongensis (strain DSM 15242 / JCM 11007 / NBRC 100824 / MB4) (Thermoanaerobacter tengcongensis).